We begin with the raw amino-acid sequence, 300 residues long: MSLNLDAMMTERRNPASAAIDTLSTLDILNLINAEDSKVAPAIARILPQIAQAVDAVSAAFARQGRLIYCGAGTSGRLGILDASECPPTFGTPAGQVIGVIAGGEPAILQAVENAEDNPQAAQDDLQRLALSSRDVVVGIAASGRTPYVLGALRYARGVGATTVALSSNPDSPMAPLADILLTPIVGPEVITGSSRMKAGTAQKMILNMLSSAAMIRSGKVYGNLMVDVEATNAKLVERQIRIVMEAGECDRATAVEALERSQRQCKTAIVMVLSGLSATEAQALLERHRGFIRPALDER.

One can recognise an SIS domain in the interval 57–220 (VSAAFARQGR…SSAAMIRSGK (164 aa)). Glu85 functions as the Proton donor in the catalytic mechanism. Glu116 is a catalytic residue.

Belongs to the GCKR-like family. MurNAc-6-P etherase subfamily. In terms of assembly, homodimer.

It carries out the reaction N-acetyl-D-muramate 6-phosphate + H2O = N-acetyl-D-glucosamine 6-phosphate + (R)-lactate. It functions in the pathway amino-sugar metabolism; N-acetylmuramate degradation. The protein operates within amino-sugar metabolism; 1,6-anhydro-N-acetylmuramate degradation. Its pathway is cell wall biogenesis; peptidoglycan recycling. Specifically catalyzes the cleavage of the D-lactyl ether substituent of MurNAc 6-phosphate, producing GlcNAc 6-phosphate and D-lactate. Together with AnmK, is also required for the utilization of anhydro-N-acetylmuramic acid (anhMurNAc) either imported from the medium or derived from its own cell wall murein, and thus plays a role in cell wall recycling. The chain is N-acetylmuramic acid 6-phosphate etherase from Edwardsiella ictaluri (strain 93-146).